A 201-amino-acid chain; its full sequence is 3-isopropylmalate dehydratase small subunit (201 aa).

It belongs to the LeuD family. LeuD type 1 subfamily. In terms of assembly, heterodimer of LeuC and LeuD.

The catalysed reaction is (2R,3S)-3-isopropylmalate = (2S)-2-isopropylmalate. The protein operates within amino-acid biosynthesis; L-leucine biosynthesis; L-leucine from 3-methyl-2-oxobutanoate: step 2/4. In terms of biological role, catalyzes the isomerization between 2-isopropylmalate and 3-isopropylmalate, via the formation of 2-isopropylmaleate. The protein is 3-isopropylmalate dehydratase small subunit of Rhodopseudomonas palustris (strain BisA53).